The sequence spans 215 residues: Guanylate kinase (215 aa).

The Guanylate kinase-like domain occupies G11–S189. A18 to S25 contributes to the ATP binding site.

The protein belongs to the guanylate kinase family.

It localises to the cytoplasm. The enzyme catalyses GMP + ATP = GDP + ADP. Its function is as follows. Essential for recycling GMP and indirectly, cGMP. The polypeptide is Guanylate kinase (Bordetella bronchiseptica (strain ATCC BAA-588 / NCTC 13252 / RB50) (Alcaligenes bronchisepticus)).